The primary structure comprises 605 residues: DNA mismatch repair protein MutL (605 aa).

This sequence belongs to the DNA mismatch repair MutL/HexB family.

Functionally, this protein is involved in the repair of mismatches in DNA. It is required for dam-dependent methyl-directed DNA mismatch repair. May act as a 'molecular matchmaker', a protein that promotes the formation of a stable complex between two or more DNA-binding proteins in an ATP-dependent manner without itself being part of a final effector complex. The chain is DNA mismatch repair protein MutL from Sinorhizobium medicae (strain WSM419) (Ensifer medicae).